A 542-amino-acid chain; its full sequence is MERIMINPLLSIQNSPTKFLKPPLSSIHRQQQQQERQSNNNTLFMGEARPRRATTFACLSIRRRRNNNGVSEFEETARFEQVGGKGISVLCGLGYWVQGSRCFPWLALNFHMVHSLALQPSTLQLVQYSCSLPMVAKPLYGVLSDVLYIGSGRRVPYIAIGVFLQVLAWGSMGIFQGAREVLPSLVACVLLSNLGASITEVAKDALVAEYGLRYRINGLQSYALMASAAGGVLGNLLGGYLLLTTPPKISFLVFSALLSLQLVVSLSSKEESFGLPRIAETSSVLESVKKQISNLKEAIQADEISQPLIWAVVSIAMVPLLSGSVFCYQTQVLNLDPSVIGMSKVIGQLMLLCLTVVYDRYLKTLPMRPLIHIIQLLYGLSILLDYILVKQINLGFGISNEVYVLCFSSLAEILAQFKILPFAVRLASMCPQGCEGSVTSFLASTLCLSQIVSAFLGVGLANLIGITSSNYSNLSSGILIQSLAALAPLCFMHLVPMSEPVIEKEGKRGISKRSRRNRRVGRVVDKESVTYRRERESEEAQR.

Residues 1–78 (MERIMINPLL…GVSEFEETAR (78 aa)) constitute a chloroplast transit peptide. Residues 24–45 (LSSIHRQQQQQERQSNNNTLFM) are disordered. The next 12 membrane-spanning stretches (helical) occupy residues 103-123 (FPWL…PSTL), 132-152 (LPMV…IGSG), 155-175 (VPYI…MGIF), 181-201 (VLPS…ITEV), 223-243 (ALMA…YLLL), 246-266 (PPKI…VVSL), 308-328 (LIWA…VFCY), 338-358 (SVIG…TVVY), 369-389 (PLIH…YILV), 404-424 (VLCF…PFAV), 446-466 (LCLS…LIGI), and 477-497 (GILI…LVPM). The disordered stretch occupies residues 506 to 542 (GKRGISKRSRRNRRVGRVVDKESVTYRRERESEEAQR). A compositionally biased stretch (basic residues) spans 509 to 521 (GISKRSRRNRRVG). The segment covering 522–542 (RVVDKESVTYRRERESEEAQR) has biased composition (basic and acidic residues).

It belongs to the major facilitator superfamily. Folate-biopterin transporter (TC 2.A.71) family.

The protein resides in the plastid. The protein localises to the chloroplast membrane. In terms of biological role, could mediate folate transport. This chain is Probable folate-biopterin transporter 8, chloroplastic, found in Arabidopsis thaliana (Mouse-ear cress).